A 238-amino-acid chain; its full sequence is DNA repair protein RecO (238 aa).

The protein belongs to the RecO family.

In terms of biological role, involved in DNA repair and RecF pathway recombination. The chain is DNA repair protein RecO from Anaplasma marginale (strain Florida).